A 163-amino-acid polypeptide reads, in one-letter code: Dual specificity phosphatase 28 (163 aa).

A Tyrosine-protein phosphatase domain is found at 10-151 (PFARVAPALF…LQKYEQTLQA (142 aa)). The Phosphocysteine intermediate role is filled by Cys-95.

It belongs to the protein-tyrosine phosphatase family. Non-receptor class dual specificity subfamily. In terms of assembly, monomer.

The enzyme catalyses O-phospho-L-tyrosyl-[protein] + H2O = L-tyrosyl-[protein] + phosphate. The catalysed reaction is O-phospho-L-seryl-[protein] + H2O = L-seryl-[protein] + phosphate. It catalyses the reaction O-phospho-L-threonyl-[protein] + H2O = L-threonyl-[protein] + phosphate. Has phosphatase activity with the synthetic substrate 6,8-difluoro-4-methylumbelliferyl phosphate (in vitro). Has almost no detectable activity with phosphotyrosine, even less activity with phosphothreonine and displays complete lack of activity with phosphoserine. The poor activity with phosphotyrosine may be due to steric hindrance by bulky amino acid sidechains that obstruct access to the active site. In Mus musculus (Mouse), this protein is Dual specificity phosphatase 28 (Dusp28).